The primary structure comprises 82 residues: Myosin light chain alkali (82 aa).

Residues 7-42 (GCYGDFIECLKLYDKEENGTMMLAELQHALLALGES) enclose the EF-hand domain.

In terms of assembly, myosin is a hexamer of 2 heavy chains and 4 light chains.

This is Myosin light chain alkali (Mlc1) from Drosophila sechellia (Fruit fly).